We begin with the raw amino-acid sequence, 445 residues long: Phosphoglucosamine mutase (445 aa).

The active-site Phosphoserine intermediate is Ser-102. Ser-102, Asp-241, Asp-243, and Asp-245 together coordinate Mg(2+). Ser-102 is modified (phosphoserine).

It belongs to the phosphohexose mutase family. Mg(2+) serves as cofactor. Post-translationally, activated by phosphorylation.

The catalysed reaction is alpha-D-glucosamine 1-phosphate = D-glucosamine 6-phosphate. In terms of biological role, catalyzes the conversion of glucosamine-6-phosphate to glucosamine-1-phosphate. This is Phosphoglucosamine mutase from Pectobacterium carotovorum subsp. carotovorum (strain PC1).